Consider the following 495-residue polypeptide: DUF21 domain-containing protein At4g14230 (495 aa).

Residues 1 to 42 are Extracellular-facing; it reads MHPINAVVAARMLAGISQSNALQSEAIPFGSLEWITYAGISC. The CNNM transmembrane domain maps to 30–212; the sequence is GSLEWITYAG…GKGGELTHDE (183 aa). The helical transmembrane segment at 43-63 threads the bilayer; the sequence is FLVLFAGIMSGLTLGLMSLGL. At 64–92 the chain is on the cytoplasmic side; that stretch reads VELEILQRSGTPKEKKQSAAIFPVVQKQH. The helical transmembrane segment at 93–113 threads the bilayer; sequence QLLVTLLLFNALAMEGLPIYL. The Extracellular portion of the chain corresponds to 114–120; it reads DKIFNEY. The chain crosses the membrane as a helical span at residues 121 to 141; sequence VAIILSVTFVLFVGEVIPQAI. The Cytoplasmic segment spans residues 142–146; the sequence is CTRYG. A helical membrane pass occupies residues 147–167; it reads LAVGANLVWLVRILMVLSYPI. The Extracellular portion of the chain corresponds to 168-495; the sequence is SFPIAKMLDW…TMTGPPQGNN (328 aa). CBS domains lie at 231-291, 296-356, and 357-426; these read MTPI…TGTL, GIRR…NNSE, and LTAP…IVDE. The disordered stretch occupies residues 330–354; sequence KGKSKGHPSTLHEENSGESNVSSNN. N-linked (GlcNAc...) asparagine glycosylation is present at Asn349. The residue at position 352 (Ser352) is a Phosphoserine. The N-linked (GlcNAc...) asparagine glycan is linked to Asn353. The disordered stretch occupies residues 455 to 495; that stretch reads SGRRLLGPKGSGGPKTPKASSTPKPDDKLMGTMTGPPQGNN. Positions 456–477 are enriched in low complexity; sequence GRRLLGPKGSGGPKTPKASSTP.

It localises to the membrane. The polypeptide is DUF21 domain-containing protein At4g14230 (CBSDUF2) (Arabidopsis thaliana (Mouse-ear cress)).